A 132-amino-acid polypeptide reads, in one-letter code: MAKEYSRTQRIGDQMQRELAELIRREVKDPRVGLVTITAVDVSRDLGHAKVFITVMGEETPDAVQQSLKALNSAASFLRLHLGRSMQLRSVPQLHFHFDESVSRGVHLSALIERAVAEDRLHKDADESDTKE.

It belongs to the RbfA family. Monomer. Binds 30S ribosomal subunits, but not 50S ribosomal subunits or 70S ribosomes.

It localises to the cytoplasm. Its function is as follows. One of several proteins that assist in the late maturation steps of the functional core of the 30S ribosomal subunit. Associates with free 30S ribosomal subunits (but not with 30S subunits that are part of 70S ribosomes or polysomes). Required for efficient processing of 16S rRNA. May interact with the 5'-terminal helix region of 16S rRNA. The protein is Ribosome-binding factor A of Pseudomonas putida (strain ATCC 700007 / DSM 6899 / JCM 31910 / BCRC 17059 / LMG 24140 / F1).